The chain runs to 159 residues: Keratin-associated protein 11-1 (159 aa).

Repeat copies occupy residues 107–116, 117–126, 127–136, and 137–146. Residues 107-146 form a 4 X 10 AA approximate repeats region; that stretch reads CQPLSGVSTVCKPVRSISTVCQPVGGVSTICQPTCGVSRT.

This sequence belongs to the PMG family. As to expression, wool.

Functionally, in the wool cortex, wool keratin intermediate filaments are embedded in an interfilamentous matrix, consisting of wool keratin-associated proteins (KRTAP), which are essential for the formation of a rigid and resistant wool shaft through their extensive disulfide bond cross-linking with abundant cysteine residues of wool keratins. The matrix proteins include the high-sulfur and high-glycine-tyrosine keratins. In Capra hircus (Goat), this protein is Keratin-associated protein 11-1 (KRTAP11-1).